The following is a 168-amino-acid chain: Protein-export protein SecB (168 aa).

It belongs to the SecB family. In terms of assembly, homotetramer, a dimer of dimers. One homotetramer interacts with 1 SecA dimer.

The protein localises to the cytoplasm. Functionally, one of the proteins required for the normal export of preproteins out of the cell cytoplasm. It is a molecular chaperone that binds to a subset of precursor proteins, maintaining them in a translocation-competent state. It also specifically binds to its receptor SecA. The chain is Protein-export protein SecB from Sinorhizobium medicae (strain WSM419) (Ensifer medicae).